The chain runs to 191 residues: Rubrerythrin (191 aa).

One can recognise a Ferritin-like diiron domain in the interval 1 to 146; it reads MKSLKGSRTE…DFARNIKEGR (146 aa). Glu-20, Glu-53, Glu-94, Glu-97, Glu-128, His-131, Cys-158, Cys-161, Cys-174, and Cys-177 together coordinate Fe(3+). In terms of domain architecture, Rubredoxin-like spans 153–191; the sequence is ATKWRCRNCGYVHEGTGAPELCPACAHPKAHFELLGINW.

As to quaternary structure, homodimer. Possesses two rubredoxin-like centers and two non-sulfur oxo-bridged di-iron centers per dimer. It depends on Fe(3+) as a cofactor.

Its subcellular location is the cytoplasm. In terms of biological role, may provide oxidative stress protection via catalytic reduction of intracellular hydrogen peroxide. This chain is Rubrerythrin (rbr), found in Nitratidesulfovibrio vulgaris (strain ATCC 29579 / DSM 644 / CCUG 34227 / NCIMB 8303 / VKM B-1760 / Hildenborough) (Desulfovibrio vulgaris).